The chain runs to 865 residues: Leucine--tRNA ligase (865 aa).

The 'HIGH' region motif lies at 48 to 58 (PYPSGQLHVGH). A 'KMSKS' region motif is present at residues 626 to 630 (KMSKS). Lys-629 is an ATP binding site.

It belongs to the class-I aminoacyl-tRNA synthetase family.

It localises to the cytoplasm. The catalysed reaction is tRNA(Leu) + L-leucine + ATP = L-leucyl-tRNA(Leu) + AMP + diphosphate. This Gluconobacter oxydans (strain 621H) (Gluconobacter suboxydans) protein is Leucine--tRNA ligase.